The sequence spans 235 residues: Orotidine 5'-phosphate decarboxylase (235 aa).

Substrate is bound by residues D10, K33, 60 to 69 (DLKMHDIPNT), T123, R185, Q194, G214, and R215. K62 (proton donor) is an active-site residue.

Belongs to the OMP decarboxylase family. Type 1 subfamily. As to quaternary structure, homodimer.

It catalyses the reaction orotidine 5'-phosphate + H(+) = UMP + CO2. It participates in pyrimidine metabolism; UMP biosynthesis via de novo pathway; UMP from orotate: step 2/2. Its function is as follows. Catalyzes the decarboxylation of orotidine 5'-monophosphate (OMP) to uridine 5'-monophosphate (UMP). This is Orotidine 5'-phosphate decarboxylase from Lactobacillus acidophilus (strain ATCC 700396 / NCK56 / N2 / NCFM).